We begin with the raw amino-acid sequence, 292 residues long: Acetylglutamate kinase (292 aa).

Substrate is bound by residues 64–65 (GG), arginine 86, and asparagine 190.

This sequence belongs to the acetylglutamate kinase family. ArgB subfamily.

The protein localises to the cytoplasm. The catalysed reaction is N-acetyl-L-glutamate + ATP = N-acetyl-L-glutamyl 5-phosphate + ADP. The protein operates within amino-acid biosynthesis; L-arginine biosynthesis; N(2)-acetyl-L-ornithine from L-glutamate: step 2/4. Functionally, catalyzes the ATP-dependent phosphorylation of N-acetyl-L-glutamate. The protein is Acetylglutamate kinase of Geotalea uraniireducens (strain Rf4) (Geobacter uraniireducens).